A 233-amino-acid polypeptide reads, in one-letter code: Small ribosomal subunit protein uS3 (233 aa).

One can recognise a KH type-2 domain in the interval 39–107 (VRQYLNKELA…PAQINIAEVR (69 aa)).

The protein belongs to the universal ribosomal protein uS3 family. Part of the 30S ribosomal subunit. Forms a tight complex with proteins S10 and S14.

Its function is as follows. Binds the lower part of the 30S subunit head. Binds mRNA in the 70S ribosome, positioning it for translation. The chain is Small ribosomal subunit protein uS3 from Cronobacter sakazakii (strain ATCC BAA-894) (Enterobacter sakazakii).